Reading from the N-terminus, the 695-residue chain is F-box only protein 34 (695 aa).

3 disordered regions span residues 239-275, 316-373, and 472-524; these read GQSR…QGEP, LTNG…CPSL, and GQDQ…PGGS. One can recognise an F-box domain in the interval 556–608; it reads QQYMACLPHHIIVKIFRLLPTLSLAILKCTCRYFKSIIEYYNIRPADSRWVRD.

Directly interacts with SKP1 and CUL1.

Its function is as follows. Substrate-recognition component of the SCF (SKP1-CUL1-F-box protein)-type E3 ubiquitin ligase complex. This is F-box only protein 34 (Fbxo34) from Mus musculus (Mouse).